Here is a 472-residue protein sequence, read N- to C-terminus: Velvet complex subunit umv2 (472 aa).

Basic and acidic residues-rich tracts occupy residues 1–10 (MSRSDTDGRD), 29–59 (SQRR…DSHG), 67–80 (YSRD…HRGD), and 89–105 (SYQR…EQER). Disordered regions lie at residues 1–121 (MSRS…PLEA), 281–327 (CDDG…QFGG), and 433–472 (SQGI…EDDE). The span at 106 to 116 (SYGGASASRSS) shows a compositional bias: low complexity. The 284-residue stretch at 158-441 (ENGRRYRLVV…ASQGIKIPVR (284 aa)) folds into the Velvet domain. Positions 286–298 (RSSTHPQHASEST) are enriched in polar residues. The span at 456–466 (DGMGDYDGASG) shows a compositional bias: gly residues.

It belongs to the velvet family. VelB subfamily. As to quaternary structure, component of the heterotrimeric velvet complex composed of laeA, veA and velB; VeA acting as a bridging protein between laeA and velB. Forms a heterodimeric complex with vosA; the formation of the velB-vosA complex is light-dependent.

The protein localises to the nucleus. It is found in the cytoplasm. In terms of biological role, component of the velvet transcription factor complex that controls sexual/asexual developmental ratio in response to light, promoting sexual development in the darkness while stimulating asexual sporulation under illumination. The velvet complex acts as a global regulator for secondary metabolite gene expression. Component of the velB-VosA heterodimeric complex that plays a dual role in activating genes associated with spore maturation and repressing certain development-associated genes. The velB-VosA complex binds DNA through the DNA-binding domain of vosA that recognizes an 11-nucleotide consensus sequence 5'-CTGGCCGCGGC-3' consisting of two motifs in the promoters of key developmental regulatory genes. Required for full virulence on seedlings. The chain is Velvet complex subunit umv2 from Mycosarcoma maydis (Corn smut fungus).